Here is a 294-residue protein sequence, read N- to C-terminus: UDP-3-O-acyl-N-acetylglucosamine deacetylase (294 aa).

Residues histidine 75, histidine 232, and aspartate 236 each coordinate Zn(2+). Histidine 259 (proton donor) is an active-site residue.

The protein belongs to the LpxC family. The cofactor is Zn(2+).

The catalysed reaction is a UDP-3-O-[(3R)-3-hydroxyacyl]-N-acetyl-alpha-D-glucosamine + H2O = a UDP-3-O-[(3R)-3-hydroxyacyl]-alpha-D-glucosamine + acetate. It participates in glycolipid biosynthesis; lipid IV(A) biosynthesis; lipid IV(A) from (3R)-3-hydroxytetradecanoyl-[acyl-carrier-protein] and UDP-N-acetyl-alpha-D-glucosamine: step 2/6. Its function is as follows. Catalyzes the hydrolysis of UDP-3-O-myristoyl-N-acetylglucosamine to form UDP-3-O-myristoylglucosamine and acetate, the committed step in lipid A biosynthesis. The polypeptide is UDP-3-O-acyl-N-acetylglucosamine deacetylase (Campylobacter lari (strain RM2100 / D67 / ATCC BAA-1060)).